The following is a 357-amino-acid chain: F-box only protein 25 (357 aa).

Residues M1–E83 are interaction with beta-actin. Residues G224–L271 enclose the F-box domain.

In terms of assembly, part of a SCF (SKP1-cullin-F-box) protein ligase complex consisting of FBXO25, SKP1, CUL1 and RBX1. Interacts directly with SKP1 and CUL1. Interacts (via C-terminus) with actin (via N-terminus).

The protein resides in the nucleus. It participates in protein modification; protein ubiquitination. Its function is as follows. Substrate-recognition component of the SCF (SKP1-CUL1-F-box protein)-type E3 ubiquitin ligase complex. May play a role in accumulation of expanded polyglutamine (polyQ) protein huntingtin (HTT). This chain is F-box only protein 25 (Fbxo25), found in Rattus norvegicus (Rat).